An 804-amino-acid polypeptide reads, in one-letter code: Endoplasmin (804 aa).

Residues 1 to 21 form the signal peptide; it reads MRALWVLGLCCVLLTFGSVRA. The SRT pseudosubstrate motif signature appears at 42–44; the sequence is SRT. Asn62 carries an N-linked (GlcNAc...) asparagine glycan. At Ser64 the chain carries Phosphoserine. Asn107 carries N-linked (GlcNAc...) asparagine glycosylation. ATP-binding residues include Asn107, Asp149, and Asn162. Lys168 is modified (N6-(2-hydroxyisobutyryl)lysine). Phosphoserine is present on Ser172. Residue Phe199 coordinates ATP. N-linked (GlcNAc...) asparagine glycosylation occurs at Asn217. A disordered region spans residues 288-323; that stretch reads TVEEPMEEEEAAKEEKEESDDEAAVEEEEEEKKPKT. Positions 289–317 are enriched in acidic residues; the sequence is VEEPMEEEEAAKEEKEESDDEAAVEEEEE. Ser306 and Ser403 each carry phosphoserine. Position 404 is an N6-succinyllysine (Lys404). An N-linked (GlcNAc...) asparagine glycan is attached at Asn445. Residue Ser447 is modified to Phosphoserine. Lys479 bears the N6-acetyllysine mark. N-linked (GlcNAc...) asparagine glycans are attached at residues Asn481 and Asn502. The residue at position 633 (Lys633) is an N6-succinyllysine. Residues 750 to 804 form a disordered region; that stretch reads DPDAKVEDEPEEEPEETTEDTTEDTEQDEDEEMDVGTDEEEQETAKESTAEKDEL. The span at 757–791 shows a compositional bias: acidic residues; it reads DEPEEEPEETTEDTTEDTEQDEDEEMDVGTDEEEQ. Phosphothreonine is present on Thr786. Residues 792–804 show a composition bias toward basic and acidic residues; the sequence is ETAKESTAEKDEL. The Prevents secretion from ER signature appears at 801–804; the sequence is KDEL.

Belongs to the heat shock protein 90 family. Homodimer; disulfide-linked. Component of an EIF2 complex at least composed of CELF1/CUGBP1, CALR, CALR3, EIF2S1, EIF2S2, HSP90B1 and HSPA5. Part of a large chaperone multiprotein complex comprising DNAJB11, HSP90B1, HSPA5, HYOU, PDIA2, PDIA4, PDIA6, PPIB, SDF2L1, UGGT1 and very small amounts of ERP29, but not, or at very low levels, CALR nor CANX. Interacts with AIMP1; regulates its retention in the endoplasmic reticulum. Hyperglycosylated form interacts with OS9; promoting its degradation by the endoplasmic reticulum associated degradation (ERAD). Interacts with CNPY3. This interaction is disrupted in the presence of ATP. Interacts with TLR4 and TLR9, but not with TLR3. Interacts with MZB1 in a calcium-dependent manner. Interacts with METTL23. Interacts with IL1B; the interaction facilitates cargo translocation into the ERGIC. Interacts with EIF2AK3. Post-translationally, phosphorylated by CK2. N-glycosylated cotranslationally at Asn-217 by STT3A-containing OST-A complex: this glycosylation is constitutive. In response to various stress, 5 additional facultative sites (Asn-62, Asn-107, Asn-445, Asn-481 and Asn-502) can be glycosylated post-translationally by STT3B-containing OST-B complex, leading to a hyperglycosylated form that is degraded by the ER-associated degradation (ERAD) pathway. In normal conditions, the OST-A complex together with CCDC134 prevent glycosylation at facultative sites during protein folding, thereby preventing hyperglycosylation. Mechanistically, nascent HSP90B1 is tethered during translation to a specialized CCDC134-containing translocon that forms a microenvironment for its folding, in which STT3A associates with the SRT pseudosubstrate motif, and prevents access to facultative glycosylation sites until folding is completed, rendering its facultative sites inaccessible to the OST-B complex.

It is found in the endoplasmic reticulum lumen. It localises to the sarcoplasmic reticulum lumen. Its subcellular location is the melanosome. It catalyses the reaction ATP + H2O = ADP + phosphate + H(+). Its function is as follows. ATP-dependent chaperone involved in the processing of proteins in the endoplasmic reticulum, regulating their transport. Together with MESD, acts as a modulator of the Wnt pathway by promoting the folding of LRP6, a coreceptor of the canonical Wnt pathway. When associated with CNPY3, required for proper folding of Toll-like receptors. Promotes folding and trafficking of TLR4 to the cell surface. May participate in the unfolding of cytosolic leaderless cargos (lacking the secretion signal sequence) such as the interleukin 1/IL-1 to facilitate their translocation into the ERGIC (endoplasmic reticulum-Golgi intermediate compartment) and secretion; the translocation process is mediated by the cargo receptor TMED10. This is Endoplasmin (HSP90B1) from Macaca fascicularis (Crab-eating macaque).